An 84-amino-acid chain; its full sequence is Small ribosomal subunit protein eS27 (84 aa).

The C4-type zinc finger occupies 38 to 60; the sequence is CPKCGATTTTFSHAHRQILCQKC.

It belongs to the eukaryotic ribosomal protein eS27 family. As to quaternary structure, component of the small ribosomal subunit. The cofactor is Zn(2+).

Its subcellular location is the cytoplasm. In terms of biological role, component of the small ribosomal subunit. The ribosome is a large ribonucleoprotein complex responsible for the synthesis of proteins in the cell. Required for proper rRNA processing and maturation of 18S rRNAs. The protein is Small ribosomal subunit protein eS27 (RPS27) of Entamoeba histolytica (strain ATCC 30459 / HM-1:IMSS / ABRM).